We begin with the raw amino-acid sequence, 521 residues long: Ribonuclease Y (521 aa).

The helical transmembrane segment at 1–21 (MFFIEHPFVYLGLDLIVGCLI) threads the bilayer. In terms of domain architecture, KH spans 211–271 (TVSMVPLPSD…VRREVARLAL (61 aa)). One can recognise an HD domain in the interval 337 to 430 (VLQHSLEVAF…VQAADALSGA (94 aa)).

The protein belongs to the RNase Y family.

Its subcellular location is the cell membrane. Functionally, endoribonuclease that initiates mRNA decay. The protein is Ribonuclease Y of Desulfotalea psychrophila (strain LSv54 / DSM 12343).